Reading from the N-terminus, the 211-residue chain is Orotidine 5'-phosphate decarboxylase (211 aa).

Substrate contacts are provided by residues D7, K29, 57–66 (DLKLADIPNT), S109, 162–172 (PGIGAQGGSPV), G185, and R186. K59 serves as the catalytic Proton donor.

The protein belongs to the OMP decarboxylase family. Type 1 subfamily. Homodimer.

The catalysed reaction is orotidine 5'-phosphate + H(+) = UMP + CO2. Its pathway is pyrimidine metabolism; UMP biosynthesis via de novo pathway; UMP from orotate: step 2/2. Its function is as follows. Catalyzes the decarboxylation of orotidine 5'-monophosphate (OMP) to uridine 5'-monophosphate (UMP). The protein is Orotidine 5'-phosphate decarboxylase of Pyrococcus furiosus (strain ATCC 43587 / DSM 3638 / JCM 8422 / Vc1).